The primary structure comprises 225 residues: Phosphoenolpyruvate guanylyltransferase (225 aa).

Phosphoenolpyruvate contacts are provided by threonine 150, glycine 166, and serine 169. Residues 167–186 form a disordered region; sequence PESARGHANSGARPLNGQWP.

This sequence belongs to the CofC family.

The catalysed reaction is phosphoenolpyruvate + GTP + H(+) = enolpyruvoyl-2-diphospho-5'-guanosine + diphosphate. It functions in the pathway cofactor biosynthesis; coenzyme F420 biosynthesis. Guanylyltransferase that catalyzes the activation of phosphoenolpyruvate (PEP) as enolpyruvoyl-2-diphospho-5'-guanosine, via the condensation of PEP with GTP. It is involved in the biosynthesis of coenzyme F420, a hydride carrier cofactor. This chain is Phosphoenolpyruvate guanylyltransferase, found in Rhodococcus erythropolis (strain PR4 / NBRC 100887).